The chain runs to 100 residues: Small ribosomal subunit protein uS14c (100 aa).

This sequence belongs to the universal ribosomal protein uS14 family. Part of the 30S ribosomal subunit.

It localises to the plastid. Functionally, binds 16S rRNA, required for the assembly of 30S particles. This chain is Small ribosomal subunit protein uS14c (rps14), found in Cuscuta reflexa (Southern Asian dodder).